A 92-amino-acid chain; its full sequence is Bombyxin A-1 (92 aa).

The first 19 residues, Met1–Thr19, serve as a signal peptide directing secretion. Gln20 is subject to Pyrrolidone carboxylic acid. 3 disulfides stabilise this stretch: Cys29–Cys79, Cys41–Cys92, and Cys78–Cys83. A propeptide spans Ser50–Gly70 (c peptide like).

Belongs to the insulin family. In terms of assembly, heterodimer of a B chain and an A chain linked by two disulfide bonds.

Its subcellular location is the secreted. Functionally, brain peptide responsible for activation of prothoracic glands to produce ecdysone in insects. This chain is Bombyxin A-1 (BBXA1), found in Bombyx mori (Silk moth).